The chain runs to 30 residues: Cyclotide cter-F (30 aa).

Residues 1-30 constitute a cross-link (cyclopeptide (Gly-Asp)); that stretch reads GIPCGESCVFIPCISSVVGCSCKSKVCYLD. 3 cysteine pairs are disulfide-bonded: C4–C20, C8–C22, and C13–C27.

In terms of processing, contains 3 disulfide bonds. Post-translationally, this is a cyclic peptide.

In terms of biological role, probably participates in a plant defense mechanism. In Clitoria ternatea (Butterfly pea), this protein is Cyclotide cter-F.